The sequence spans 335 residues: Cell division protein ZipA (335 aa).

Over 1–4 (MDLN) the chain is Periplasmic. The helical transmembrane segment at 5-25 (AILIILGVIALIILVAHGIWS) threads the bilayer. At 26–335 (NRCEKSQYFE…AERDYLARVS (310 aa)) the chain is on the cytoplasmic side.

This sequence belongs to the ZipA family. In terms of assembly, interacts with FtsZ via their C-terminal domains.

It localises to the cell inner membrane. Essential cell division protein that stabilizes the FtsZ protofilaments by cross-linking them and that serves as a cytoplasmic membrane anchor for the Z ring. Also required for the recruitment to the septal ring of downstream cell division proteins. The polypeptide is Cell division protein ZipA (Histophilus somni (strain 129Pt) (Haemophilus somnus)).